The sequence spans 518 residues: Cytochrome P450 736A117 (518 aa).

Asn-12 is a glycosylation site (N-linked (GlcNAc...) asparagine). The chain crosses the membrane as a helical span at residues 17–37 (FLQPLAFTLLAIFLVLLYTWY). Asn-185, Asn-275, and Asn-356 each carry an N-linked (GlcNAc...) asparagine glycan. Cys-460 contributes to the heme binding site.

It belongs to the cytochrome P450 family. Heme serves as cofactor. As to expression, expressed at similar levels in fruit kernel, seedlings, leaves, stems and buds.

It is found in the membrane. The chain is Cytochrome P450 736A117 from Prunus mume (Japanese apricot).